Here is a 127-residue protein sequence, read N- to C-terminus: Small ribosomal subunit protein uS11 (127 aa).

This sequence belongs to the universal ribosomal protein uS11 family. Part of the 30S ribosomal subunit. Interacts with proteins S7 and S18. Binds to IF-3.

Its function is as follows. Located on the platform of the 30S subunit, it bridges several disparate RNA helices of the 16S rRNA. Forms part of the Shine-Dalgarno cleft in the 70S ribosome. The chain is Small ribosomal subunit protein uS11 from Anaeromyxobacter sp. (strain Fw109-5).